An 864-amino-acid polypeptide reads, in one-letter code: Leucine--tRNA ligase (864 aa).

The 'HIGH' region signature appears at P42–H52. Positions K619–S623 match the 'KMSKS' region motif. K622 contributes to the ATP binding site.

This sequence belongs to the class-I aminoacyl-tRNA synthetase family.

The protein localises to the cytoplasm. The catalysed reaction is tRNA(Leu) + L-leucine + ATP = L-leucyl-tRNA(Leu) + AMP + diphosphate. This is Leucine--tRNA ligase from Wigglesworthia glossinidia brevipalpis.